A 791-amino-acid chain; its full sequence is MRLSEAWLRQYVNPMVDTAGLVRQLTMAGLEVDGAEPAAADFSGVVVARILEAAPHPEADRLQICRVDTGGGEPLQIVCGAANARAGLVAPLAMEGAVLPGPLKIKRSRLRGVESFGMLCSAKELGLEDDASGLLELPADAPVGADIRDYLQLDDRILEIDLTPNRADCLSVEGIAREVALINRLPFRGVDAGTVAVGSQRRLVVHLDAPEACPRYLGRVITGIDARAQTPRWMKERLRRSGLRSLGPAVDVTNYVLLELGQPLHAFDLERLSGDVHVRQARDGELLRLLNGEEITLSSDVLVIADEEKALALAGIMGGEQSAVGGATSDVFLECAFFAPALIMGKARRYGLATDSSHRFERGVDPSLQRRAIERATALLLEIAGGEAGPVTEAVREDLLPLRAPVRLREQRIGQLLGLNLPRDEVADILARLGMSVEEDEPGWTVTPPSFRFDIALEADLIEEIGRVYGYDAIPRRRPAVASAMQPASETVLGLDRVKDLLADRGYQEVITYSFVSAEMQRRIDPEAEPEALLNPISADLAVMRISLWTGLLDCAQKNLSRQQDRVRIFETGLKFVRRDGSLEQRNTLAGLVLGSILDEQWGEKSRRVDFFDVKSDVEAILGLTGKSSVRFRPAIHHALHPGQSAEILIGDGGAGWLGMLHPQIERELGFEQPVFMFELDAGALLQRDLPRFAPLSRFPLVRRDLALVVARDLPAADLLEAVAASGGPLVRDTVLFDVYSGAGVEAGKKSVALGVTLQDAEETLTDDRVDEVMSRIVARLAADFGAKLRE.

One can recognise a tRNA-binding domain in the interval 39–148 (AADFSGVVVA…ADAPVGADIR (110 aa)). A B5 domain is found at 401–476 (PLRAPVRLRE…RVYGYDAIPR (76 aa)). Mg(2+) is bound by residues D454, D460, E463, and E464. The FDX-ACB domain maps to 697 to 790 (SRFPLVRRDL…LAADFGAKLR (94 aa)).

Belongs to the phenylalanyl-tRNA synthetase beta subunit family. Type 1 subfamily. In terms of assembly, tetramer of two alpha and two beta subunits. It depends on Mg(2+) as a cofactor.

Its subcellular location is the cytoplasm. The catalysed reaction is tRNA(Phe) + L-phenylalanine + ATP = L-phenylalanyl-tRNA(Phe) + AMP + diphosphate + H(+). The chain is Phenylalanine--tRNA ligase beta subunit from Methylococcus capsulatus (strain ATCC 33009 / NCIMB 11132 / Bath).